Here is a 732-residue protein sequence, read N- to C-terminus: Kell blood group glycoprotein (732 aa).

The segment at 1–37 (MEGGDQSEEEPRERSQAGGMGTLWSQESTPEERLPVE) is disordered. The Cytoplasmic segment spans residues 1–47 (MEGGDQSEEEPRERSQAGGMGTLWSQESTPEERLPVEGSRPWAVARR). A Phosphoserine modification is found at Ser7. Residues 48–67 (VLTAILILGLLLCFSVLLFY) traverse the membrane as a helical; Signal-anchor for type II membrane protein segment. Over 68–732 (NFQNCGPRPC…LNPSSRCQLW (665 aa)) the chain is Extracellular. The region spanning 76–732 (PCETSVCLDL…LNPSSRCQLW (657 aa)) is the Peptidase M13 domain. Cys77 and Cys82 are disulfide-bonded. N-linked (GlcNAc...) asparagine glycosylation is found at Asn94 and Asn115. 4 disulfides stabilise this stretch: Cys100-Cys717, Cys108-Cys682, Cys155-Cys410, and Cys610-Cys729. A glycan (N-linked (GlcNAc...) asparagine; in KEL2 antigen) is linked at Asn191. N-linked (GlcNAc...) asparagine glycosylation is present at Asn345. His581 is a binding site for Zn(2+). Glu582 is a catalytic residue. A Zn(2+)-binding site is contributed by His585. Residue Asn627 is glycosylated (N-linked (GlcNAc...) asparagine). A Zn(2+)-binding site is contributed by Glu634. Asp638 (proton donor) is an active-site residue. The disordered stretch occupies residues 684–703 (KPSPQDSHDTHSPPHLRVHG).

It belongs to the peptidase M13 family. Heterodimer with XK; disulfide-linked. The cofactor is Zn(2+). Post-translationally, N-glycosylated. In terms of tissue distribution, expressed at high levels in erythrocytes and testis (in Sertoli cells), and, at lower levels, in skeletal muscle, tonsils (in follicular dendritic cells), lymph node, spleen and appendix (at protein level). Also expressed in many adult and fetal nonerythroid tissues, including brain, spleen, lymph nodes and bone marrow.

The protein resides in the cell membrane. In terms of biological role, zinc endopeptidase with endothelin-3-converting enzyme activity. Cleaves EDN1, EDN2 and EDN3, with a marked preference for EDN3. This is Kell blood group glycoprotein (KEL) from Homo sapiens (Human).